Consider the following 433-residue polypeptide: 3-phosphoshikimate 1-carboxyvinyltransferase (433 aa).

Residues Lys22, Ser23, and Arg27 each coordinate 3-phosphoshikimate. Lys22 serves as a coordination point for phosphoenolpyruvate. Positions 95 and 123 each coordinate phosphoenolpyruvate. 4 residues coordinate 3-phosphoshikimate: Ser166, Gln168, Asp314, and Lys341. A phosphoenolpyruvate-binding site is contributed by Gln168. Asp314 functions as the Proton acceptor in the catalytic mechanism. Phosphoenolpyruvate contacts are provided by Arg345 and Arg386.

The protein belongs to the EPSP synthase family. Monomer.

The protein resides in the cytoplasm. The enzyme catalyses 3-phosphoshikimate + phosphoenolpyruvate = 5-O-(1-carboxyvinyl)-3-phosphoshikimate + phosphate. Its pathway is metabolic intermediate biosynthesis; chorismate biosynthesis; chorismate from D-erythrose 4-phosphate and phosphoenolpyruvate: step 6/7. In terms of biological role, catalyzes the transfer of the enolpyruvyl moiety of phosphoenolpyruvate (PEP) to the 5-hydroxyl of shikimate-3-phosphate (S3P) to produce enolpyruvyl shikimate-3-phosphate and inorganic phosphate. The sequence is that of 3-phosphoshikimate 1-carboxyvinyltransferase from Acidithiobacillus ferrooxidans (strain ATCC 23270 / DSM 14882 / CIP 104768 / NCIMB 8455) (Ferrobacillus ferrooxidans (strain ATCC 23270)).